The sequence spans 510 residues: Maturase K (510 aa).

It belongs to the intron maturase 2 family. MatK subfamily.

It is found in the plastid. The protein localises to the chloroplast. Functionally, usually encoded in the trnK tRNA gene intron. Probably assists in splicing its own and other chloroplast group II introns. This is Maturase K from Mammillaria haageana (Cactus).